We begin with the raw amino-acid sequence, 311 residues long: Probable deoxyhypusine synthase (311 aa).

Lys-284 (nucleophile) is an active-site residue.

This sequence belongs to the deoxyhypusine synthase family. The cofactor is NAD(+).

It carries out the reaction [eIF5A protein]-L-lysine + spermidine = [eIF5A protein]-deoxyhypusine + propane-1,3-diamine. It functions in the pathway protein modification; eIF5A hypusination. Functionally, catalyzes the NAD-dependent oxidative cleavage of spermidine and the subsequent transfer of the butylamine moiety of spermidine to the epsilon-amino group of a specific lysine residue of the eIF-5A precursor protein to form the intermediate deoxyhypusine residue. In Sulfolobus acidocaldarius (strain ATCC 33909 / DSM 639 / JCM 8929 / NBRC 15157 / NCIMB 11770), this protein is Probable deoxyhypusine synthase.